The following is a 182-amino-acid chain: Ribulose bisphosphate carboxylase small subunit, chloroplastic 1 (182 aa).

The N-terminal 42 residues, 1–42 (MASIMMNKSVVLSKECAKPLATPKVTLNKRGFATTIATKNRE), are a transit peptide targeting the chloroplast.

This sequence belongs to the RuBisCO small chain family. Heterohexadecamer of 8 large and 8 small subunits.

The protein resides in the plastid. It localises to the chloroplast. RuBisCO catalyzes two reactions: the carboxylation of D-ribulose 1,5-bisphosphate, the primary event in carbon dioxide fixation, as well as the oxidative fragmentation of the pentose substrate. Both reactions occur simultaneously and in competition at the same active site. Although the small subunit is not catalytic it is essential for maximal activity. This is Ribulose bisphosphate carboxylase small subunit, chloroplastic 1 from Acetabularia acetabulum (Mermaid's wine glass).